The primary structure comprises 93 residues: Stage III sporulation protein D (93 aa).

The region spanning 4-75 (YIKERTIKIG…IRHLRGGEAT (72 aa)) is the HTH deoR-type domain. A DNA-binding region (H-T-H motif) is located at residues 21-40 (KTVRVIAKEFGVSKSTVHKD).

In terms of biological role, this protein regulates the transcription of sigK, which encodes mother cell chamber RNA polymerase sigma-factor (sigma K). This Bacillus subtilis (strain 168) protein is Stage III sporulation protein D (spoIIID).